The following is an 86-amino-acid chain: Small ribosomal subunit protein bS18 (86 aa).

Belongs to the bacterial ribosomal protein bS18 family. As to quaternary structure, part of the 30S ribosomal subunit. Forms a tight heterodimer with protein bS6.

Functionally, binds as a heterodimer with protein bS6 to the central domain of the 16S rRNA, where it helps stabilize the platform of the 30S subunit. This is Small ribosomal subunit protein bS18 from Herpetosiphon aurantiacus (strain ATCC 23779 / DSM 785 / 114-95).